Consider the following 627-residue polypeptide: tRNA uridine 5-carboxymethylaminomethyl modification enzyme MnmG (627 aa).

Residues 16–21 (GAGHAG), Val-128, and Ser-183 each bind FAD. 275–289 (GPRYCPSIEDKVMRF) is a binding site for NAD(+). Gln-372 contacts FAD.

The protein belongs to the MnmG family. As to quaternary structure, homodimer. Heterotetramer of two MnmE and two MnmG subunits. FAD is required as a cofactor.

The protein localises to the cytoplasm. Functionally, NAD-binding protein involved in the addition of a carboxymethylaminomethyl (cmnm) group at the wobble position (U34) of certain tRNAs, forming tRNA-cmnm(5)s(2)U34. This chain is tRNA uridine 5-carboxymethylaminomethyl modification enzyme MnmG, found in Geobacter sulfurreducens (strain ATCC 51573 / DSM 12127 / PCA).